The sequence spans 131 residues: UPF0102 protein RPD_0400 (131 aa).

This sequence belongs to the UPF0102 family.

The sequence is that of UPF0102 protein RPD_0400 from Rhodopseudomonas palustris (strain BisB5).